Here is a 144-residue protein sequence, read N- to C-terminus: Large ribosomal subunit protein uL15 (144 aa).

Residues 1-58 are disordered; it reads MRLNTLSPAAGSKPSKKRVGRGIGSGLGKTGGRGHKGQKSRSGGSVRPGFEGGQMPLK. Residues 21 to 31 are compositionally biased toward gly residues; sequence RGIGSGLGKTG.

It belongs to the universal ribosomal protein uL15 family. As to quaternary structure, part of the 50S ribosomal subunit.

Binds to the 23S rRNA. This Vibrio atlanticus (strain LGP32) (Vibrio splendidus (strain Mel32)) protein is Large ribosomal subunit protein uL15.